Reading from the N-terminus, the 106-residue chain is uncharacterized protein (106 aa).

2 disordered regions span residues 27–47 (FSDS…DVSD) and 83–106 (SPAM…VQSK). Positions 29–39 (DSEDEPDDEAS) are enriched in acidic residues. A compositionally biased stretch (basic and acidic residues) spans 94 to 106 (GIEREDRGGVQSK).

It localises to the mitochondrion. This is an uncharacterized protein from Arabidopsis thaliana (Mouse-ear cress).